A 215-amino-acid polypeptide reads, in one-letter code: Large ribosomal subunit protein uL4 (215 aa).

The interval 46–76 (TAKSKNRAEVSGGGRKPWAQKGGGRARAGSI) is disordered. The segment covering 56 to 71 (SGGGRKPWAQKGGGRA) has biased composition (gly residues).

The protein belongs to the universal ribosomal protein uL4 family. In terms of assembly, part of the 50S ribosomal subunit.

Its function is as follows. One of the primary rRNA binding proteins, this protein initially binds near the 5'-end of the 23S rRNA. It is important during the early stages of 50S assembly. It makes multiple contacts with different domains of the 23S rRNA in the assembled 50S subunit and ribosome. In terms of biological role, forms part of the polypeptide exit tunnel. This chain is Large ribosomal subunit protein uL4, found in Helicobacter pylori (strain HPAG1).